The sequence spans 452 residues: UPF0210 protein Daud_1353 (452 aa).

The protein belongs to the UPF0210 family. Homodimer.

In Desulforudis audaxviator (strain MP104C), this protein is UPF0210 protein Daud_1353.